The chain runs to 283 residues: Glutamyl-Q tRNA(Asp) synthetase (283 aa).

L-glutamate-binding positions include 5–9 (RFAPT) and glutamate 41. A 'HIGH' region motif is present at residues 8–18 (PTPSGPLHLGS). Zn(2+) is bound by residues cysteine 97, cysteine 99, tyrosine 111, and cysteine 115. L-glutamate is bound by residues tyrosine 168 and arginine 186. The short motif at 224-228 (KLSKQ) is the 'KMSKS' region element. Lysine 227 contributes to the ATP binding site.

It belongs to the class-I aminoacyl-tRNA synthetase family. GluQ subfamily. Zn(2+) is required as a cofactor.

Functionally, catalyzes the tRNA-independent activation of glutamate in presence of ATP and the subsequent transfer of glutamate onto a tRNA(Asp). Glutamate is transferred on the 2-amino-5-(4,5-dihydroxy-2-cyclopenten-1-yl) moiety of the queuosine in the wobble position of the QUC anticodon. This is Glutamyl-Q tRNA(Asp) synthetase from Idiomarina loihiensis (strain ATCC BAA-735 / DSM 15497 / L2-TR).